The chain runs to 454 residues: tRNA modification GTPase MnmE (454 aa).

Residues arginine 23, glutamate 80, and lysine 120 each contribute to the (6S)-5-formyl-5,6,7,8-tetrahydrofolate site. A TrmE-type G domain is found at 216–377 (GMKVVIAGRP…LRNHLKQSMG (162 aa)). Residue asparagine 226 coordinates K(+). GTP is bound by residues 226–231 (NAGKSS), 245–251 (TDIAGTT), 270–273 (DTAG), 335–338 (NKAD), and 358–360 (SAR). Serine 230 contacts Mg(2+). K(+)-binding residues include threonine 245, isoleucine 247, and threonine 250. Threonine 251 is a Mg(2+) binding site. Residue lysine 454 participates in (6S)-5-formyl-5,6,7,8-tetrahydrofolate binding.

Belongs to the TRAFAC class TrmE-Era-EngA-EngB-Septin-like GTPase superfamily. TrmE GTPase family. As to quaternary structure, homodimer. Heterotetramer of two MnmE and two MnmG subunits. The cofactor is K(+).

It is found in the cytoplasm. Exhibits a very high intrinsic GTPase hydrolysis rate. Involved in the addition of a carboxymethylaminomethyl (cmnm) group at the wobble position (U34) of certain tRNAs, forming tRNA-cmnm(5)s(2)U34. The chain is tRNA modification GTPase MnmE from Yersinia enterocolitica serotype O:8 / biotype 1B (strain NCTC 13174 / 8081).